A 315-amino-acid polypeptide reads, in one-letter code: Eukaryotic translation initiation factor 2 subunit 1 (315 aa).

One can recognise an S1 motif domain in the interval 17–88 (EDVVMVNVRS…EKGYIDLSKR (72 aa)). Residue Ser49 is modified to Phosphoserine; by HRI. Ser52 bears the Phosphoserine mark. Residue Lys141 is modified to N6-acetyllysine. Phosphoserine is present on Ser158. Thr279 and Thr281 each carry phosphothreonine. Positions 292-315 (RLERENAEVDGDDDAEEMEAKAED) are disordered. A compositionally biased stretch (acidic residues) spans 299–308 (EVDGDDDAEE).

It belongs to the eIF-2-alpha family. Eukaryotic translation initiation factor 2 eIF2 is a heterotrimeric complex composed of an alpha (EIF2S1), a beta (EIF2S2) and a gamma (EIF2S3) chain. eIF2 is member of the 43S pre-initiation complex (43S PIC). eIF2 forms a complex with at least CELF1/CUGBP1, CALR, CALR3, EIF2S1, EIF2S2, HSP90B1 and HSPA5. Interaction with METAP2 protects EIF2S1 from inhibitory phosphorylation. Interacts with ABCF1. Associates with ribosomes. Interacts with DDX3X in an RNA-independent manner. In terms of processing, phosphorylation at Ser-49 and Ser-52 stabilizes the eIF-2/GDP/eIF2B complex and prevents GDP/GTP exchange reaction, thus impairing the recycling of eIF-2 between successive rounds of initiation and leading to global inhibition of translation, while concomitantly initiating the preferential translation of integrated stress response (ISR)-specific mRNAs. Substrate for at least 4 kinases: EIF2AK1/HRI, EIF2AK2/PKR, EIF2AK3/PERK and EIF2AK4/GCN2. Phosphorylation at Ser-52 by the EIF2AK3/PERK protein kinase occurs in response to the unfolded protein response. Phosphorylation on Ser-52 by the EIF2AK4/GCN2 protein kinase occurs in response to amino acid starvation and UV irradiation. Phosphorylation at Ser-52 by EIF2AK1/HRI in response to mitochondrial damage promotes relocalization to the mitochondrial surface.

It localises to the cytoplasm. It is found in the stress granule. The protein localises to the cytosol. Its subcellular location is the mitochondrion. With respect to regulation, activity is regulated by phosphorylation at Ser-49 and Ser-52, which stabilizes the eIF2/GDP/eIF2B complex and prevents the eIF2B-mediated exchange of GDP for GTP, thereby preventing the formation of the 43S pre-initiation complex (43S PIC). This results in the global attenuation of 5' cap-dependent protein synthesis and concomitant translation of ISR-specific mRNAs that contain a short upstream open reading frame (uORF) in their 5' UTR, such as ATF4, ATF5, DDIT3/CHOP and PPP1R15A/GADD34. In terms of biological role, member of the eIF2 complex that functions in the early steps of protein synthesis by forming a ternary complex with GTP and initiator tRNA. This complex binds to a 40S ribosomal subunit, followed by mRNA binding to form a 43S pre-initiation complex. Junction of the 60S ribosomal subunit to form the 80S initiation complex is preceded by hydrolysis of the GTP bound to eIF2 and release of an eIF2-GDP binary complex. In order for eIF2 to recycle and catalyze another round of initiation, the GDP bound to eIF2 must exchange with GTP by way of a reaction catalyzed by eIF2B. EIF2S1/eIF2-alpha is a key component of the integrated stress response (ISR), required for adaptation to various stress: phosphorylation by metabolic-stress sensing protein kinases (EIF2AK1/HRI, EIF2AK2/PKR, EIF2AK3/PERK and EIF2AK4/GCN2) in response to stress converts EIF2S1/eIF2-alpha in a global protein synthesis inhibitor, leading to a attenuation of cap-dependent translation, while concomitantly initiating the preferential translation of ISR-specific mRNAs, such as the transcriptional activators ATF4 and QRICH1, and hence allowing ATF4- and QRICH1-mediated reprogramming. EIF2S1/eIF2-alpha also acts as an activator of mitophagy in response to mitochondrial damage: phosphorylation by EIF2AK1/HRI promotes relocalization to the mitochondrial surface, thereby triggering PRKN-independent mitophagy. The protein is Eukaryotic translation initiation factor 2 subunit 1 (EIF2S1) of Sus scrofa (Pig).